We begin with the raw amino-acid sequence, 226 residues long: Deoxyribose-phosphate aldolase (226 aa).

The active-site Proton donor/acceptor is D94. K156 acts as the Schiff-base intermediate with acetaldehyde in catalysis. Catalysis depends on K185, which acts as the Proton donor/acceptor.

The protein belongs to the DeoC/FbaB aldolase family. DeoC type 1 subfamily.

The protein localises to the cytoplasm. The catalysed reaction is 2-deoxy-D-ribose 5-phosphate = D-glyceraldehyde 3-phosphate + acetaldehyde. The protein operates within carbohydrate degradation; 2-deoxy-D-ribose 1-phosphate degradation; D-glyceraldehyde 3-phosphate and acetaldehyde from 2-deoxy-alpha-D-ribose 1-phosphate: step 2/2. Functionally, catalyzes a reversible aldol reaction between acetaldehyde and D-glyceraldehyde 3-phosphate to generate 2-deoxy-D-ribose 5-phosphate. This chain is Deoxyribose-phosphate aldolase, found in Burkholderia lata (strain ATCC 17760 / DSM 23089 / LMG 22485 / NCIMB 9086 / R18194 / 383).